The primary structure comprises 72 residues: DNA-directed RNA polymerase subunit omega (72 aa).

The protein belongs to the RNA polymerase subunit omega family. The RNAP catalytic core consists of 2 alpha, 1 beta, 1 beta' and 1 omega subunit. When a sigma factor is associated with the core the holoenzyme is formed, which can initiate transcription.

It carries out the reaction RNA(n) + a ribonucleoside 5'-triphosphate = RNA(n+1) + diphosphate. Its function is as follows. Promotes RNA polymerase assembly. Latches the N- and C-terminal regions of the beta' subunit thereby facilitating its interaction with the beta and alpha subunits. In Clostridium beijerinckii (strain ATCC 51743 / NCIMB 8052) (Clostridium acetobutylicum), this protein is DNA-directed RNA polymerase subunit omega.